The primary structure comprises 705 residues: Choline transporter-like protein 2 (705 aa).

The Cytoplasmic portion of the chain corresponds to 1–31 (MEDQRKYGAYGTPQKYDPTFKGPIYNRGCTD). Position 12 is a phosphothreonine (T12). The helical transmembrane segment at 32–52 (VLCCVLLFLAIVGYVAVGLIA) threads the bilayer. Residues 53-231 (WTHGDPRKVI…RIFEDYTVSW (179 aa)) are Extracellular-facing. 2 N-linked (GlcNAc...) asparagine glycosylation sites follow: N186 and N199. The chain crosses the membrane as a helical span at residues 232-252 (YWIVIGLVIAMVLSLLFIILL). Topologically, residues 253-255 (RFL) are cytoplasmic. A helical transmembrane segment spans residues 256–276 (AGIMVWVMIVLVILVLGYGIF). Over 277–314 (HCYMEYARLRGEAGSDISVLDLGFQTDFRVYLHLRQTW) the chain is Extracellular. A helical membrane pass occupies residues 315 to 335 (LAFMIILSILEVIIILLLIFL). Topologically, residues 336 to 363 (RKRILIAIALIKEASRAVGYVMCSLLYP) are cytoplasmic. A helical membrane pass occupies residues 364 to 384 (LVTFFLLCLCIAYWASTAVFL). Residues 385–455 (STSNEAVYKI…IFNAFMFFWL (71 aa)) are Extracellular-facing. N414 carries an N-linked (GlcNAc...) asparagine glycan. Residues 456 to 478 (ANFVLALGQVTLAGAFASYYWAL) form a helical membrane-spanning segment. Topologically, residues 479–503 (RKPDDMPAFPLFAAFGRALRYHTGS) are cytoplasmic. The chain crosses the membrane as a helical span at residues 504-524 (LAFGSLILAIVQIIRVILEYL). The Extracellular segment spans residues 525-562 (DQRLKAAENKFAKFLMTCLKCCFWCLEKFIKFLNRNAY). Residues 563–583 (IMIAIYGTNFCTSARNAFFLL) traverse the membrane as a helical segment. The Cytoplasmic segment spans residues 584–598 (MRNIIRVAVLDKVTD). A helical membrane pass occupies residues 599–619 (FLFLLGKLLIVGSVGILAFFF). Topologically, residues 620 to 637 (FTHRIRIVQDTAPPLNYY) are extracellular. Residues 638-658 (WVPILTVIVGSYLIAHGFFSV) traverse the membrane as a helical segment. At 659–705 (YGMCVDTLFLCFLEDLERNNGSSERPYFMSSTLKKLLNKTNKKPVES) the chain is on the cytoplasmic side.

Belongs to the CTL (choline transporter-like) family. As to quaternary structure, interacts with COCH. Post-translationally, N-glycosylated; contains sialic acid. Not O-glycosylated. In terms of tissue distribution, expressed at high levels in lung, colon and in supporting cells of the inner ear (at protein level). Progressively lower levels in brain, tongue, liver and kidney (at protein level). In the tongue, strongly expressed in epithelial cells and in nerves within the musculature. Within the nerves, expression observed in the perineurial cells of the nerve sheath, in the Schwann cells and myelinated nerve fibers (at protein level). In the kidney, prominent expression in glomeruli in the lining of Bowman's capsule and on the mesangial cells adjacent to the vessels within the glomerulus (at protein level). Strongly expressed on the membranes of splenocytes (at protein level).

The protein localises to the cell membrane. It is found in the mitochondrion outer membrane. It catalyses the reaction choline(out) + n H(+)(in) = choline(in) + n H(+)(out). The enzyme catalyses ethanolamine(out) + n H(+)(in) = ethanolamine(in) + n H(+)(out). Choline/H+ antiporter, mainly in mitochodria. Also acts as a low-affinity ethanolamine/H+ antiporter, regulating the supply of extracellular ethanolamine (Etn) for the CDP-Etn pathway, redistribute intracellular Etn and balance the CDP-Cho and CDP-Etn arms of the Kennedy pathway. The polypeptide is Choline transporter-like protein 2 (SLC44A2) (Cavia porcellus (Guinea pig)).